The following is a 286-amino-acid chain: ATP synthase gamma chain (286 aa).

This sequence belongs to the ATPase gamma chain family. F-type ATPases have 2 components, CF(1) - the catalytic core - and CF(0) - the membrane proton channel. CF(1) has five subunits: alpha(3), beta(3), gamma(1), delta(1), epsilon(1). CF(0) has three main subunits: a, b and c.

Its subcellular location is the cell inner membrane. Its function is as follows. Produces ATP from ADP in the presence of a proton gradient across the membrane. The gamma chain is believed to be important in regulating ATPase activity and the flow of protons through the CF(0) complex. In Alteromonas mediterranea (strain DSM 17117 / CIP 110805 / LMG 28347 / Deep ecotype), this protein is ATP synthase gamma chain.